A 173-amino-acid chain; its full sequence is Translation initiation factor IF-3 (173 aa).

The protein belongs to the IF-3 family. Monomer.

It localises to the cytoplasm. Functionally, IF-3 binds to the 30S ribosomal subunit and shifts the equilibrium between 70S ribosomes and their 50S and 30S subunits in favor of the free subunits, thus enhancing the availability of 30S subunits on which protein synthesis initiation begins. In Bacillus subtilis (strain 168), this protein is Translation initiation factor IF-3.